Consider the following 594-residue polypeptide: Adenine deaminase 1 (594 aa).

This sequence belongs to the metallo-dependent hydrolases superfamily. Adenine deaminase family. Requires Mn(2+) as cofactor.

The enzyme catalyses adenine + H2O + H(+) = hypoxanthine + NH4(+). In Latilactobacillus sakei subsp. sakei (strain 23K) (Lactobacillus sakei subsp. sakei), this protein is Adenine deaminase 1.